The sequence spans 1378 residues: Tonsoku-like protein (1378 aa).

TPR repeat units follow at residues 27–60, 67–100, 107–147, 162–195, 202–235, 242–275, 311–344, and 352–385; these read AALC…RERA, AVAH…AHSL, QRAW…VDEE, TRLY…AEQN, FRAR…AHTM, SECC…GSQK, MVIC…AELL, and AIIH…RSGN. The interval 475–524 is disordered; that stretch reads AATAESEALEAGEVELSEGEDDTDGLTPQLEEDEELQGHLGRRKGSKWNR. Residues 481 to 509 show a composition bias toward acidic residues; the sequence is EALEAGEVELSEGEDDTDGLTPQLEEDEE. Basic residues predominate over residues 514–523; the sequence is LGRRKGSKWN. 3 ANK repeats span residues 528–557, 561–590, and 597–626; these read MGET…PLNP, CGWT…AVDD, and EGIT…SVTL. The disordered stretch occupies residues 667-789; the sequence is AASGQDPHSS…REAATASTSR (123 aa). The segment covering 672-684 has biased composition (polar residues); the sequence is DPHSSQAFHTPSS. Positions 691 to 702 are enriched in pro residues; that stretch reads TSPPLSPCPEPP. Ser-719 bears the Phosphoserine mark. 2 stretches are compositionally biased toward low complexity: residues 736–753 and 777–789; these read GPAS…AGPA and ASNR…STSR. Arg-797 bears the Omega-N-methylarginine mark. The disordered stretch occupies residues 842-933; sequence LTRSRRPRPR…PLGPAPPPPI (92 aa). 2 stretches are compositionally biased toward polar residues: residues 883–899 and 907–918; these read CMQS…SSLA and STPRVSEPSGDS. LRR repeat units lie at residues 1069 to 1093, 1097 to 1122, 1128 to 1151, 1188 to 1212, 1247 to 1270, 1275 to 1300, and 1331 to 1354; these read HTAL…LVAA, MPSL…AMGL, LQSL…SLAS, AEHL…TLQS, GCAL…DLCR, CPSL…LLST, and AAQL…ALRQ.

Belongs to the Tonsoku family. As to quaternary structure, component of the MMS22L-TONSL complex, a complex at least composed of MMS22L and TONSL/NFKBIL2. Interacts with the MCM complex, the FACT complex and the RPA complex. Interacts with MCM5; the interaction is direct. Binds histones, with a strong preference for histone H3.1 (histones H3.1 and H3-4/H3.1t). Interacts (via ANK repeats) with histone H4; specifically binds histone H4 lacking methylation at 'Lys-20' (H4K20me0). May interact with DNAJC9; the interaction seems to be histone-dependent. In terms of tissue distribution, expressed in heart, skeletal muscle and tracheal epithelial cells.

Its subcellular location is the nucleus. The protein localises to the chromosome. It localises to the cytoplasm. Component of the MMS22L-TONSL complex, a complex that promotes homologous recombination-mediated repair of double-strand breaks (DSBs) at stalled or collapsed replication forks. The MMS22L-TONSL complex is required to maintain genome integrity during DNA replication. It mediates the assembly of RAD51 filaments on single-stranded DNA (ssDNA): the MMS22L-TONSL complex is recruited to DSBs following histone replacement by histone chaperones and eviction of the replication protein A complex (RPA/RP-A) from DSBs. Following recruitment to DSBs, the TONSL-MMS22L complex promotes recruitment of RAD51 filaments and subsequent homologous recombination. Within the complex, TONSL acts as a histone reader, which recognizes and binds newly synthesized histones following their replacement by histone chaperones. Specifically binds histone H4 lacking methylation at 'Lys-20' (H4K20me0) and histone H3.1. The sequence is that of Tonsoku-like protein from Homo sapiens (Human).